The chain runs to 189 residues: Large ribosomal subunit protein uL5 (189 aa).

It belongs to the universal ribosomal protein uL5 family. Part of the 50S ribosomal subunit; part of the 5S rRNA/L5/L18/L25 subcomplex. Contacts the 5S rRNA and the P site tRNA. Forms a bridge to the 30S subunit in the 70S ribosome.

Functionally, this is one of the proteins that bind and probably mediate the attachment of the 5S RNA into the large ribosomal subunit, where it forms part of the central protuberance. In the 70S ribosome it contacts protein S13 of the 30S subunit (bridge B1b), connecting the 2 subunits; this bridge is implicated in subunit movement. Contacts the P site tRNA; the 5S rRNA and some of its associated proteins might help stabilize positioning of ribosome-bound tRNAs. The protein is Large ribosomal subunit protein uL5 of Salinispora tropica (strain ATCC BAA-916 / DSM 44818 / JCM 13857 / NBRC 105044 / CNB-440).